A 352-amino-acid chain; its full sequence is Keratocan (352 aa).

The first 20 residues, 1-20 (MAGTICFIMWVLFITDTVWS), serve as a signal peptide directing secretion. An LRRNT domain is found at 33–71 (DDWTIHDFECPMECFCPPSFPTALYCENRGLKEIPAIPS). 2 disulfides stabilise this stretch: C42/C48 and C46/C58. 10 LRR repeats span residues 72 to 93 (RIWY…PFEN), 96 to 117 (QLRW…KGAL), 122 to 142 (KLLF…PLPR), 143 to 164 (SLEQ…TFSN), 167 to 180 (NLTL…KLVD), 193 to 213 (NLMQ…RLPA), 214 to 235 (NTMQ…YFNV), 238 to 258 (KVAF…PSRG), 263 to 282 (SILD…RISA), and 283 to 304 (HLQH…VICP). Residue N93 is glycosylated (N-linked (GlcNAc...) (keratan sulfate) asparagine). Residue N167 is glycosylated (N-linked (GlcNAc...) (keratan sulfate) asparagine). N222 carries N-linked (GlcNAc...) asparagine glycosylation. N-linked (GlcNAc...) asparagine glycosylation is present at N298. A disulfide bridge links C303 with C343.

This sequence belongs to the small leucine-rich proteoglycan (SLRP) family. SLRP class II subfamily. Post-translationally, binds keratan sulfate chains. Cornea (at protein level). Increased expression in the stroma of keratoconus corneas. Also detected in trachea, and in low levels, in intestine, skeletal muscle, ovary, lung and putamen.

Its subcellular location is the secreted. It localises to the extracellular space. The protein resides in the extracellular matrix. Its function is as follows. May be important in developing and maintaining corneal transparency and for the structure of the stromal matrix. This Homo sapiens (Human) protein is Keratocan (KERA).